Reading from the N-terminus, the 453-residue chain is Bifunctional protein GlmU (453 aa).

Positions 1–225 (MNIVILAAGT…EWETLGVNSK (225 aa)) are pyrophosphorylase. UDP-N-acetyl-alpha-D-glucosamine-binding positions include 6–9 (LAAG), K20, Q71, 76–77 (GT), 98–100 (YGD), G135, E150, N165, and N223. Position 100 (D100) interacts with Mg(2+). N223 lines the Mg(2+) pocket. A linker region spans residues 226–246 (AQLAELERIHQRNVADALLVD). An N-acetyltransferase region spans residues 247-453 (GVTLADPARV…GYVRPVKKKS (207 aa)). UDP-N-acetyl-alpha-D-glucosamine-binding residues include R329 and K347. The Proton acceptor role is filled by H359. UDP-N-acetyl-alpha-D-glucosamine-binding residues include Y362 and N373. Residues A376, 382 to 383 (NY), S401, and A419 each bind acetyl-CoA.

The protein in the N-terminal section; belongs to the N-acetylglucosamine-1-phosphate uridyltransferase family. This sequence in the C-terminal section; belongs to the transferase hexapeptide repeat family. As to quaternary structure, homotrimer. Mg(2+) serves as cofactor.

The protein localises to the cytoplasm. It carries out the reaction alpha-D-glucosamine 1-phosphate + acetyl-CoA = N-acetyl-alpha-D-glucosamine 1-phosphate + CoA + H(+). It catalyses the reaction N-acetyl-alpha-D-glucosamine 1-phosphate + UTP + H(+) = UDP-N-acetyl-alpha-D-glucosamine + diphosphate. It participates in nucleotide-sugar biosynthesis; UDP-N-acetyl-alpha-D-glucosamine biosynthesis; N-acetyl-alpha-D-glucosamine 1-phosphate from alpha-D-glucosamine 6-phosphate (route II): step 2/2. The protein operates within nucleotide-sugar biosynthesis; UDP-N-acetyl-alpha-D-glucosamine biosynthesis; UDP-N-acetyl-alpha-D-glucosamine from N-acetyl-alpha-D-glucosamine 1-phosphate: step 1/1. Its pathway is bacterial outer membrane biogenesis; LPS lipid A biosynthesis. Its function is as follows. Catalyzes the last two sequential reactions in the de novo biosynthetic pathway for UDP-N-acetylglucosamine (UDP-GlcNAc). The C-terminal domain catalyzes the transfer of acetyl group from acetyl coenzyme A to glucosamine-1-phosphate (GlcN-1-P) to produce N-acetylglucosamine-1-phosphate (GlcNAc-1-P), which is converted into UDP-GlcNAc by the transfer of uridine 5-monophosphate (from uridine 5-triphosphate), a reaction catalyzed by the N-terminal domain. The polypeptide is Bifunctional protein GlmU (Burkholderia orbicola (strain MC0-3)).